The chain runs to 243 residues: Ubiquinone/menaquinone biosynthesis C-methyltransferase UbiE (243 aa).

Residues threonine 69, aspartate 90, and 116-117 (DA) contribute to the S-adenosyl-L-methionine site.

This sequence belongs to the class I-like SAM-binding methyltransferase superfamily. MenG/UbiE family.

The enzyme catalyses a 2-demethylmenaquinol + S-adenosyl-L-methionine = a menaquinol + S-adenosyl-L-homocysteine + H(+). It carries out the reaction a 2-methoxy-6-(all-trans-polyprenyl)benzene-1,4-diol + S-adenosyl-L-methionine = a 5-methoxy-2-methyl-3-(all-trans-polyprenyl)benzene-1,4-diol + S-adenosyl-L-homocysteine + H(+). It functions in the pathway quinol/quinone metabolism; menaquinone biosynthesis; menaquinol from 1,4-dihydroxy-2-naphthoate: step 2/2. The protein operates within cofactor biosynthesis; ubiquinone biosynthesis. Its function is as follows. Methyltransferase required for the conversion of demethylmenaquinol (DMKH2) to menaquinol (MKH2) and the conversion of 2-polyprenyl-6-methoxy-1,4-benzoquinol (DDMQH2) to 2-polyprenyl-3-methyl-6-methoxy-1,4-benzoquinol (DMQH2). This is Ubiquinone/menaquinone biosynthesis C-methyltransferase UbiE from Burkholderia vietnamiensis (strain G4 / LMG 22486) (Burkholderia cepacia (strain R1808)).